The sequence spans 477 residues: UDP-N-acetylmuramate--L-alanine ligase (477 aa).

122 to 128 (GTHGKTT) serves as a coordination point for ATP.

This sequence belongs to the MurCDEF family.

It is found in the cytoplasm. It catalyses the reaction UDP-N-acetyl-alpha-D-muramate + L-alanine + ATP = UDP-N-acetyl-alpha-D-muramoyl-L-alanine + ADP + phosphate + H(+). It participates in cell wall biogenesis; peptidoglycan biosynthesis. In terms of biological role, cell wall formation. The polypeptide is UDP-N-acetylmuramate--L-alanine ligase (Xanthomonas axonopodis pv. citri (strain 306)).